A 122-amino-acid polypeptide reads, in one-letter code: uncharacterized protein (122 aa).

It localises to the mitochondrion. This is an uncharacterized protein from Arabidopsis thaliana (Mouse-ear cress).